We begin with the raw amino-acid sequence, 214 residues long: ATP-dependent dethiobiotin synthetase BioD (214 aa).

Position 10-15 (10-15 (GIGKTY)) interacts with ATP. Position 14 (Thr-14) interacts with Mg(2+). Lys-35 is a catalytic residue. Thr-39 is a substrate binding site. ATP contacts are provided by residues Asp-44, 109–112 (EGAG), and 169–170 (NC). Positions 44 and 109 each coordinate Mg(2+).

Belongs to the dethiobiotin synthetase family. As to quaternary structure, homodimer. The cofactor is Mg(2+).

The protein localises to the cytoplasm. The catalysed reaction is (7R,8S)-7,8-diammoniononanoate + CO2 + ATP = (4R,5S)-dethiobiotin + ADP + phosphate + 3 H(+). It functions in the pathway cofactor biosynthesis; biotin biosynthesis; biotin from 7,8-diaminononanoate: step 1/2. Functionally, catalyzes a mechanistically unusual reaction, the ATP-dependent insertion of CO2 between the N7 and N8 nitrogen atoms of 7,8-diaminopelargonic acid (DAPA, also called 7,8-diammoniononanoate) to form a ureido ring. The polypeptide is ATP-dependent dethiobiotin synthetase BioD (Methanocaldococcus jannaschii (strain ATCC 43067 / DSM 2661 / JAL-1 / JCM 10045 / NBRC 100440) (Methanococcus jannaschii)).